We begin with the raw amino-acid sequence, 133 residues long: DNA-directed RNA polymerases I and III subunit RPAC2 (133 aa).

An N-acetylmethionine modification is found at Met-1. A disordered region spans residues 1 to 22 (MEEDQELERKMSGVKTSMAEGE).

The protein belongs to the archaeal Rpo11/eukaryotic RPB11/RPC19 RNA polymerase subunit family. In terms of assembly, component of the RNA polymerase I and RNA polymerase III complexes consisting of at least 13 and 17 subunits, respectively. The transcriptionally active RNA polymerase III complex consists of a ten-subunit horseshoe-shaped catalytic core composed of POLR3A/RPC1, POLR3B/RPC2, POLR1C/RPAC1, POLR1D/RPAC2, POLR3K/RPC10, POLR2E/RPABC1, POLR2F/RPABC2, POLR2H/RPABC3, POLR2K/RPABC4 and POLR2L/RPABC5; a mobile stalk composed of two subunits POLR3H/RPC8 and CRCP/RPC9, protruding from the core and functioning primarily in transcription initiation; and additional subunits homologous to general transcription factors of the RNA polymerase II machinery, POLR3C/RPC3-POLR3F/RPC6-POLR3G/RPC7 heterotrimer required for transcription initiation and POLR3D/RPC4-POLR3E/RPC5 heterodimer involved in both transcription initiation and termination.

It is found in the nucleus. Its function is as follows. DNA-dependent RNA polymerase catalyzes the transcription of DNA into RNA using the four ribonucleoside triphosphates as substrates. Common component of RNA polymerases I and III which synthesize ribosomal RNA precursor pre-rRNA and short non-coding RNAs including 5S rRNA, snRNAs, tRNAs and miRNAs, respectively. This is DNA-directed RNA polymerases I and III subunit RPAC2 (POLR1D) from Bos taurus (Bovine).